We begin with the raw amino-acid sequence, 435 residues long: Nucleoredoxin (435 aa).

Serine 2 carries the N-acetylserine modification. Residues 167–321 (PKPFREVIAG…VLELSDSNAV (155 aa)) form the Thioredoxin domain.

Belongs to the nucleoredoxin family. In terms of assembly, associates with the phosphatase 2A holoenzyme. Interacts with PPP2CA; the interaction is direct. Interacts with DVL1 (via PDZ domain); the interaction is direct and regulated by oxidative stress.

It is found in the cytoplasm. The protein resides in the cytosol. Its subcellular location is the nucleus. The catalysed reaction is [protein]-dithiol + NAD(+) = [protein]-disulfide + NADH + H(+). It carries out the reaction [protein]-dithiol + NADP(+) = [protein]-disulfide + NADPH + H(+). Functionally, functions as a redox-dependent negative regulator of the Wnt signaling pathway, possibly by preventing ubiquitination of DVL3 by the BCR(KLHL12) complex. May also function as a transcriptional regulator act as a regulator of protein phosphatase 2A (PP2A). In Bos taurus (Bovine), this protein is Nucleoredoxin (NXN).